Consider the following 249-residue polypeptide: tRNA (guanine-N(1)-)-methyltransferase (249 aa).

Residues Gly113 and 133–138 (VGDYVL) contribute to the S-adenosyl-L-methionine site.

Belongs to the RNA methyltransferase TrmD family. In terms of assembly, homodimer.

It localises to the cytoplasm. It carries out the reaction guanosine(37) in tRNA + S-adenosyl-L-methionine = N(1)-methylguanosine(37) in tRNA + S-adenosyl-L-homocysteine + H(+). Functionally, specifically methylates guanosine-37 in various tRNAs. This Tolumonas auensis (strain DSM 9187 / NBRC 110442 / TA 4) protein is tRNA (guanine-N(1)-)-methyltransferase.